Here is a 369-residue protein sequence, read N- to C-terminus: Maltose/maltodextrin import ATP-binding protein MalK (369 aa).

The ABC transporter domain occupies 4 to 234; it reads VTLSSVYKAF…PANRFVAGFI (231 aa). ATP is bound at residue 36 to 43; that stretch reads GPSGCGKS.

The protein belongs to the ABC transporter superfamily. Maltooligosaccharide importer (TC 3.A.1.1.1) family. As to quaternary structure, the complex is composed of two ATP-binding proteins (MalK), two transmembrane proteins (MalG and MalK) and a solute-binding protein (MalE).

It localises to the cell inner membrane. The catalysed reaction is D-maltose(out) + ATP + H2O = D-maltose(in) + ADP + phosphate + H(+). In terms of biological role, part of the ABC transporter complex MalEFGK involved in maltose/maltodextrin import. Responsible for energy coupling to the transport system. In Yersinia pestis bv. Antiqua (strain Antiqua), this protein is Maltose/maltodextrin import ATP-binding protein MalK.